The sequence spans 179 residues: Large ribosomal subunit protein uL5 (179 aa).

Belongs to the universal ribosomal protein uL5 family. Part of the 50S ribosomal subunit; part of the 5S rRNA/L5/L18/L25 subcomplex. Contacts the 5S rRNA and the P site tRNA. Forms a bridge to the 30S subunit in the 70S ribosome.

Functionally, this is one of the proteins that bind and probably mediate the attachment of the 5S RNA into the large ribosomal subunit, where it forms part of the central protuberance. In the 70S ribosome it contacts protein S13 of the 30S subunit (bridge B1b), connecting the 2 subunits; this bridge is implicated in subunit movement. Contacts the P site tRNA; the 5S rRNA and some of its associated proteins might help stabilize positioning of ribosome-bound tRNAs. This chain is Large ribosomal subunit protein uL5, found in Prochlorococcus marinus (strain MIT 9303).